The following is a 57-amino-acid chain: UPF0391 membrane protein RPB_2024 (57 aa).

The next 2 membrane-spanning stretches (helical) occupy residues 4–24 (WVVT…GGIA) and 30–50 (IAKV…VVGL).

It belongs to the UPF0391 family.

It is found in the cell membrane. This Rhodopseudomonas palustris (strain HaA2) protein is UPF0391 membrane protein RPB_2024.